Reading from the N-terminus, the 834-residue chain is Sodium/hydrogen exchanger 3 (834 aa).

An N-terminal signal peptide occupies residues 1–25; the sequence is MWGLGARGPDRGLLLALALGGLARA. At 26–51 the chain is on the extracellular side; the sequence is GGVEVEPGGAHGESGGFQVVTFEWAH. Residues 52–74 form a helical membrane-spanning segment; that stretch reads VQDPYVIALWILVASLAKIGFHL. At 75-82 the chain is on the cytoplasmic side; that stretch reads SHKVTSVV. Residues 83–102 traverse the membrane as a helical segment; it reads PESALLIVLGLVLGGIVWAA. Residues 103 to 111 lie on the Extracellular side of the membrane; sequence DHIASFTLT. The helical transmembrane segment at 112–129 threads the bilayer; it reads PTVFFFYLLPPIVLDAGY. The Cytoplasmic portion of the chain corresponds to 130–132; the sequence is FMP. A helical transmembrane segment spans residues 133 to 168; it reads NRLFFGNLGTILLYAVVGTVWNAATTGLSLYGVFLS. A 1,2-diacyl-sn-glycero-3-phospho-(1D-myo-inositol) contacts are provided by Gly138, Gly141, and Thr142. Topologically, residues 169-181 are extracellular; sequence GLMGDLQIGLLDF. The chain crosses the membrane as a helical span at residues 182–203; it reads LLFGSLMAAVDPVAVLAVFEEV. At 204 to 205 the chain is on the cytoplasmic side; the sequence is HV. Residues 206–237 form a helical membrane-spanning segment; sequence NEVLFIIVFGESLLNDAVTVVLYNVFESFVAL. Topologically, residues 238–244 are extracellular; sequence GGDNVTG. Asn241 carries N-linked (GlcNAc...) asparagine glycosylation. Residues 245-279 form a helical membrane-spanning segment; sequence VDCVKGIVSFFVVSLGGTLVGVVFAFLLSLVTRFT. Over 280–281 the chain is Cytoplasmic; sequence KH. A helical transmembrane segment spans residues 282–304; the sequence is VRIIEPGFVFIISYLSYLTSEML. At 305–306 the chain is on the extracellular side; that stretch reads SL. Residues 307–323 form a helical membrane-spanning segment; sequence SAILAITFCGICCQKYV. The Cytoplasmic portion of the chain corresponds to 324-330; that stretch reads KANISEQ. A helical membrane pass occupies residues 331–359; it reads SATTVRYTMKMLASSAETIIFMFLGISAV. Residues 360 to 367 are Extracellular-facing; it reads NPFIWTWN. The chain crosses the membrane as a helical span at residues 368–389; that stretch reads TAFVLLTLVFISVYRAIGVVLQ. Topologically, residues 390–402 are cytoplasmic; the sequence is TWLLNRYRMVQLE. Residue Met398 coordinates a 1,2-diacyl-sn-glycero-3-phospho-(1D-myo-inositol). Residues 403–426 traverse the membrane as a helical segment; it reads PIDQVVLSYGGLRGAVAFALVVLL. Over 427 to 433 the chain is Extracellular; the sequence is DGDKVKE. The chain crosses the membrane as a helical span at residues 434 to 467; it reads KNLFVSTTIIVVFFTVIFQGLTIKPLVQWLKVKR. At 468 to 834 the chain is on the cytoplasmic side; that stretch reads SEHREPRLNE…PAALPESTHM (367 aa). Residues Gln497, Ile498, and His500 each contribute to the a 1,2-diacyl-sn-glycero-3-phospho-(1D-myo-inositol) site. Residues Ser555 and Ser563 each carry the phosphoserine modification. An interaction with EZR region spans residues 575–589; the sequence is RSSTVEASVSYLLRE. The tract at residues 590-667 is interaction with NHERF4; it reads NVSAVCLDMQ…RKRLESFKST (78 aa). Positions 591–695 are interaction with AHCYL1; that stretch reads VSAVCLDMQS…AQKRRNSSIP (105 aa). A phosphoserine mark is found at Ser592 and Ser607. A Phosphoserine; by SGK1 modification is found at Ser663. Basic residues predominate over residues 679 to 691; the sequence is KLYKRERAQKRRN. The tract at residues 679 to 728 is disordered; sequence KLYKRERAQKRRNSSIPNGKLPMESPAQNFTIKEKDLELSDTEEPPNYDE. Positions 717–728 are enriched in acidic residues; that stretch reads LSDTEEPPNYDE. 3 positions are modified to phosphoserine: Ser718, Ser810, and Ser813. The interval 814–834 is disordered; that stretch reads FLQADGPEERPPAALPESTHM.

The protein belongs to the monovalent cation:proton antiporter 1 (CPA1) transporter (TC 2.A.36) family. Homodimer. Found in the forms of complex and dynamic macromolecular complexes. Binds NHERF1 and NHERF2. Interacts with CHP1; increases SLC9A3 trafficking and activity at the plasma membrane. Interacts with CHP2 and SHANK2. Interacts with PDZK1 (via C-terminal PDZ domain). Interacts with NHERF4 and interaction decrease in response to elevated calcium ion levels. Interacts with AHCYL1; the interaction is required for SLC9A3 activity. Interacts with SNX27 (via PDZ domains); directs SLC9A3 membrane insertion from early endosomes to the plasma membrane. Interacts with EZR; interaction targets SLC9A3 to the apical membrane. Phosphorylated by PKA, which inhibits activity. Phosphorylation at Ser-663 by SGK1 is associated with increased abundance at the cell membrane. Phosphorylation at Ser-718 by CSNK2A1 regulates SLC9A3 activity through the formation of multiple signaling complexes.

The protein localises to the apical cell membrane. It localises to the cell membrane. It is found in the recycling endosome membrane. Its subcellular location is the early endosome membrane. It carries out the reaction Na(+)(in) + H(+)(out) = Na(+)(out) + H(+)(in). With respect to regulation, seems to switch between active and inactive modes in response to various stimuli. Activated directly or indirectly by membrane phosphatidylinositol (PIs). Regulated by a variety of auxiliary proteins, which facilitate the maturation, cell surface expression and function of the transporter. Inhibited specifically by the drug tenapanor. Its function is as follows. Plasma membrane Na(+)/H(+) antiporter. Exchanges intracellular H(+) ions for extracellular Na(+) in 1:1 stoichiometry, playing a key role in salt and fluid absorption and pH homeostasis. Major apical Na(+)/H(+) exchanger in kidney and intestine playing an important role in renal and intestine Na(+) absorption and blood pressure regulation. This is Sodium/hydrogen exchanger 3 from Homo sapiens (Human).